The sequence spans 126 residues: Acidic phospholipase A2 S1E6-a (126 aa).

The signal sequence occupies residues 1 to 3 (VEG). Disulfide bonds link Cys29/Cys119, Cys31/Cys47, Cys46/Cys98, Cys52/Cys126, Cys53/Cys91, Cys60/Cys84, and Cys78/Cys89. Residues Tyr30, Gly32, and Gly34 each contribute to the Ca(2+) site. His50 is an active-site residue. Asp51 is a Ca(2+) binding site. Asp92 is an active-site residue.

As to quaternary structure, homodimer. Ca(2+) is required as a cofactor. In terms of tissue distribution, expressed by the venom gland.

The protein localises to the secreted. The enzyme catalyses a 1,2-diacyl-sn-glycero-3-phosphocholine + H2O = a 1-acyl-sn-glycero-3-phosphocholine + a fatty acid + H(+). Snake venom phospholipase A2 (PLA2) that inhibits ADP-induced platelet aggregation. PLA2 catalyzes the calcium-dependent hydrolysis of the 2-acyl groups in 3-sn-phosphoglycerides. The sequence is that of Acidic phospholipase A2 S1E6-a from Calloselasma rhodostoma (Malayan pit viper).